The following is a 150-amino-acid chain: MRVVIQRVLKASVTINHQLKSSIGQGLLIFLGIEENDKQEDIDFLVKKIVNLRIFNDNKGAMNRSLLDIEGELLCVSQFTLFASTKKGNRPSYIRASKSEKAIPLYEKFCATISSAMSKIIQTGTFKTNMKIKLINDGPVTICIDSKNRE.

The Gly-cisPro motif, important for rejection of L-amino acids signature appears at 138–139 (GP).

Belongs to the DTD family. Homodimer.

It is found in the cytoplasm. The catalysed reaction is glycyl-tRNA(Ala) + H2O = tRNA(Ala) + glycine + H(+). It catalyses the reaction a D-aminoacyl-tRNA + H2O = a tRNA + a D-alpha-amino acid + H(+). Functionally, an aminoacyl-tRNA editing enzyme that deacylates mischarged D-aminoacyl-tRNAs. Also deacylates mischarged glycyl-tRNA(Ala), protecting cells against glycine mischarging by AlaRS. Acts via tRNA-based rather than protein-based catalysis; rejects L-amino acids rather than detecting D-amino acids in the active site. By recycling D-aminoacyl-tRNA to D-amino acids and free tRNA molecules, this enzyme counteracts the toxicity associated with the formation of D-aminoacyl-tRNA entities in vivo and helps enforce protein L-homochirality. In Azobacteroides pseudotrichonymphae genomovar. CFP2, this protein is D-aminoacyl-tRNA deacylase.